The chain runs to 157 residues: Small ribosomal subunit protein uS7 (157 aa).

This sequence belongs to the universal ribosomal protein uS7 family. Part of the 30S ribosomal subunit. Contacts proteins S9 and S11.

In terms of biological role, one of the primary rRNA binding proteins, it binds directly to 16S rRNA where it nucleates assembly of the head domain of the 30S subunit. Is located at the subunit interface close to the decoding center, probably blocks exit of the E-site tRNA. The sequence is that of Small ribosomal subunit protein uS7 from Polaromonas sp. (strain JS666 / ATCC BAA-500).